The chain runs to 629 residues: tRNA uridine 5-carboxymethylaminomethyl modification enzyme MnmG (629 aa).

FAD is bound at residue 13–18 (GGGHAG). 273 to 287 (GPRYCPSIEDKVNRF) serves as a coordination point for NAD(+).

This sequence belongs to the MnmG family. Homodimer. Heterotetramer of two MnmE and two MnmG subunits. FAD serves as cofactor.

It localises to the cytoplasm. NAD-binding protein involved in the addition of a carboxymethylaminomethyl (cmnm) group at the wobble position (U34) of certain tRNAs, forming tRNA-cmnm(5)s(2)U34. The polypeptide is tRNA uridine 5-carboxymethylaminomethyl modification enzyme MnmG (Hahella chejuensis (strain KCTC 2396)).